The following is an 88-amino-acid chain: RNA-binding protein Hfq (88 aa).

The region spanning Asp9–Val68 is the Sm domain.

Belongs to the Hfq family. Homohexamer.

RNA chaperone that binds small regulatory RNA (sRNAs) and mRNAs to facilitate mRNA translational regulation in response to envelope stress, environmental stress and changes in metabolite concentrations. Also binds with high specificity to tRNAs. This is RNA-binding protein Hfq from Cellvibrio japonicus (strain Ueda107) (Pseudomonas fluorescens subsp. cellulosa).